The following is a 251-amino-acid chain: Zinc import ATP-binding protein ZnuC (251 aa).

The ABC transporter domain maps to 5 to 220 (VSLENVSVSF…PEFISMFGPR (216 aa)). 37–44 (GPNGAGKS) serves as a coordination point for ATP.

This sequence belongs to the ABC transporter superfamily. Zinc importer (TC 3.A.1.15.5) family. The complex is composed of two ATP-binding proteins (ZnuC), two transmembrane proteins (ZnuB) and a solute-binding protein (ZnuA).

It is found in the cell inner membrane. It catalyses the reaction Zn(2+)(out) + ATP(in) + H2O(in) = Zn(2+)(in) + ADP(in) + phosphate(in) + H(+)(in). Part of the ABC transporter complex ZnuABC involved in zinc import. Responsible for energy coupling to the transport system. This Shigella flexneri serotype 5b (strain 8401) protein is Zinc import ATP-binding protein ZnuC.